The following is a 181-amino-acid chain: Oligoribonuclease (181 aa).

Positions 8-171 (LVWIDMEMTG…DDIRESIAEL (164 aa)) constitute an Exonuclease domain. Residue Tyr129 is part of the active site.

It belongs to the oligoribonuclease family.

It localises to the cytoplasm. In terms of biological role, 3'-to-5' exoribonuclease specific for small oligoribonucleotides. The chain is Oligoribonuclease from Pseudoalteromonas atlantica (strain T6c / ATCC BAA-1087).